Here is a 346-residue protein sequence, read N- to C-terminus: Dihydroorotase (346 aa).

The Zn(2+) site is built by H14 and H16. Substrate contacts are provided by residues 16 to 18 and N42; that span reads HLR. Residues K100, H137, and H175 each coordinate Zn(2+). K100 carries the N6-carboxylysine modification. H137 lines the substrate pocket. L220 provides a ligand contact to substrate. Residue D248 coordinates Zn(2+). D248 is a catalytic residue. Residues H252 and A264 each contribute to the substrate site.

This sequence belongs to the metallo-dependent hydrolases superfamily. DHOase family. Class II DHOase subfamily. In terms of assembly, homodimer. Zn(2+) is required as a cofactor.

The enzyme catalyses (S)-dihydroorotate + H2O = N-carbamoyl-L-aspartate + H(+). It functions in the pathway pyrimidine metabolism; UMP biosynthesis via de novo pathway; (S)-dihydroorotate from bicarbonate: step 3/3. Catalyzes the reversible cyclization of carbamoyl aspartate to dihydroorotate. This Novosphingobium aromaticivorans (strain ATCC 700278 / DSM 12444 / CCUG 56034 / CIP 105152 / NBRC 16084 / F199) protein is Dihydroorotase.